The chain runs to 166 residues: Regulatory protein RecX (166 aa).

It belongs to the RecX family.

It localises to the cytoplasm. Functionally, modulates RecA activity. The protein is Regulatory protein RecX of Salmonella agona (strain SL483).